We begin with the raw amino-acid sequence, 460 residues long: Serine/threonine-protein kinase cds1 (460 aa).

Residues 60-116 (WRFGRHKSCEVVLNGPRVSNFHFEIYQGHRNDSDESENVVFLHDHSSNGTFLNFERL) enclose the FHA domain. One can recognise a Protein kinase domain in the interval 167 to 433 (YEIIRTLGSG…ESEALQHPWF (267 aa)). ATP contacts are provided by residues 173–181 (LGSGTFAVV) and K196. The active-site Proton acceptor is D294. Basic and acidic residues predominate over residues 438–453 (THEHRTPPSSSEHEAT). A disordered region spans residues 438–460 (THEHRTPPSSSEHEATEQLNSSS). Position 443 is a phosphothreonine (T443).

Belongs to the protein kinase superfamily. CAMK Ser/Thr protein kinase family. CHEK2 subfamily. Interacts with rad26. In terms of processing, autophosphorylated.

It catalyses the reaction L-seryl-[protein] + ATP = O-phospho-L-seryl-[protein] + ADP + H(+). It carries out the reaction L-threonyl-[protein] + ATP = O-phospho-L-threonyl-[protein] + ADP + H(+). Functionally, has a role in the DNA replication-monitoring S/G2 checkpoint system. It is responsible for blocking mitosis in the S phase. It monitors DNA synthesis by interacting with DNA polymerase alpha and sends a signal to block the onset of mitosis while DNA synthesis is in progress. Phosphorylates rad60 and dna2. This is Serine/threonine-protein kinase cds1 (cds1) from Schizosaccharomyces pombe (strain 972 / ATCC 24843) (Fission yeast).